The chain runs to 980 residues: Phosphoenolpyruvate carboxylase (980 aa).

Catalysis depends on residues histidine 182 and lysine 625.

This sequence belongs to the PEPCase type 1 family. The cofactor is Mg(2+).

The enzyme catalyses oxaloacetate + phosphate = phosphoenolpyruvate + hydrogencarbonate. Forms oxaloacetate, a four-carbon dicarboxylic acid source for the tricarboxylic acid cycle. This Bordetella pertussis (strain Tohama I / ATCC BAA-589 / NCTC 13251) protein is Phosphoenolpyruvate carboxylase.